Reading from the N-terminus, the 160-residue chain is Cytochrome b6-f complex subunit 4 (160 aa).

3 helical membrane-spanning segments follow: residues 36 to 56 (LLYVFPVVIMGTIGLVVGLAV), 95 to 115 (LLGIACQAAIPLGLMLIPFIE), and 131 to 151 (TFFMIGTLVTLWLGAGAIFPI).

It belongs to the cytochrome b family. PetD subfamily. In terms of assembly, the 4 large subunits of the cytochrome b6-f complex are cytochrome b6, subunit IV (17 kDa polypeptide, PetD), cytochrome f and the Rieske protein, while the 4 small subunits are PetG, PetL, PetM and PetN. The complex functions as a dimer.

The protein localises to the cellular thylakoid membrane. In terms of biological role, component of the cytochrome b6-f complex, which mediates electron transfer between photosystem II (PSII) and photosystem I (PSI), cyclic electron flow around PSI, and state transitions. This chain is Cytochrome b6-f complex subunit 4, found in Gloeothece citriformis (strain PCC 7424) (Cyanothece sp. (strain PCC 7424)).